Consider the following 331-residue polypeptide: 6-phosphogluconolactonase (331 aa).

The protein belongs to the cycloisomerase 2 family.

It catalyses the reaction 6-phospho-D-glucono-1,5-lactone + H2O = 6-phospho-D-gluconate + H(+). The protein operates within carbohydrate degradation; pentose phosphate pathway; D-ribulose 5-phosphate from D-glucose 6-phosphate (oxidative stage): step 2/3. Functionally, catalyzes the hydrolysis of 6-phosphogluconolactone to 6-phosphogluconate. The chain is 6-phosphogluconolactonase from Salmonella arizonae (strain ATCC BAA-731 / CDC346-86 / RSK2980).